The primary structure comprises 1057 residues: Diacylglycerol kinase iota (1057 aa).

Residues 15–59 are compositionally biased toward low complexity; that stretch reads AARGPARAPAAAAAAAASPPGPCSGAACAPSAAAGAGAMNPSSSA. Disordered stretches follow at residues 15–74 and 334–358; these read AARG…SSGS and LKAS…MEQE. Residues 337–352 show a composition bias toward basic residues; that stretch reads SNRKKKRTSFKRKASK. Residues 372–507 form the DAGKc domain; it reads PLMKPLLVFV…DRWNLHVERN (136 aa). 2 ANK repeats span residues 950 to 979 and 986 to 1015; these read DHCS…SELL and TGET…SLRK. Residues 1014–1024 show a composition bias toward basic and acidic residues; the sequence is RKTDSKGKTPQ. The disordered stretch occupies residues 1014–1033; sequence RKTDSKGKTPQERAQQAGDP. The PDZ-binding signature appears at 1055-1057; sequence TAV.

The protein belongs to the eukaryotic diacylglycerol kinase family. As to quaternary structure, interacts (via PDZ-binding motif) with DLG4; controls the localization of DGKI to the synapse. Interacts (via PDZ-binding motif) with DLG1. Interacts (via PDZ-binding motif) with DLG2. Interacts (via PDZ-binding motif) with DLG3. May interact with RASGRP3; involved in the regulation of RASGRP3 activity. Specifically expressed in brain and retina. In brain, highly expressed in hippocampus, caudate nucleus, occipital pole, cerebral cortex, and cerebellum. Also detected in kidney.

The protein resides in the cell projection. Its subcellular location is the axon. The protein localises to the dendrite. It localises to the presynapse. It is found in the postsynapse. The protein resides in the postsynaptic density. Its subcellular location is the synaptic cell membrane. The protein localises to the cytoplasmic vesicle. It localises to the secretory vesicle. It is found in the synaptic vesicle membrane. The protein resides in the cytoplasm. Its subcellular location is the cytosol. The protein localises to the nucleus. It catalyses the reaction a 1,2-diacyl-sn-glycerol + ATP = a 1,2-diacyl-sn-glycero-3-phosphate + ADP + H(+). It carries out the reaction 1,2-di-(9Z-octadecenoyl)-sn-glycerol + ATP = 1,2-di-(9Z-octadecenoyl)-sn-glycero-3-phosphate + ADP + H(+). The enzyme catalyses 1-octadecanoyl-2-(5Z,8Z,11Z,14Z-eicosatetraenoyl)-sn-glycerol + ATP = 1-octadecanoyl-2-(5Z,8Z,11Z,14Z-eicosatetraenoyl)-sn-glycero-3-phosphate + ADP + H(+). The catalysed reaction is 1-octadecanoyl-2-(9Z,12Z)-octadecadienoyl-sn-glycerol + ATP = 1-octadecanoyl-2-(9Z,12Z-octadecadienoyl)-sn-glycero-3-phosphate + ADP + H(+). It participates in lipid metabolism; glycerolipid metabolism. Diacylglycerol kinase that converts diacylglycerol/DAG into phosphatidic acid/phosphatidate/PA and regulates the respective levels of these two bioactive lipids. Thereby, acts as a central switch between the signaling pathways activated by these second messengers with different cellular targets and opposite effects in numerous biological processes. Has probably no preference for any of the diacylglycerols in terms of the acyl chain composition, especially for the acyl chain at the sn-2 position. By controlling the diacylglycerol/DAG-mediated activation of RASGRP3, negatively regulates the Rap1 signaling pathway. May play a role in presynaptic diacylglycerol/DAG signaling and control neurotransmitter release during metabotropic glutamate receptor-dependent long-term depression. This chain is Diacylglycerol kinase iota, found in Homo sapiens (Human).